A 368-amino-acid polypeptide reads, in one-letter code: DNA integrity scanning protein DisA (368 aa).

The 139-residue stretch at 15 to 153 (DERLRATLAA…DGRRHVLDEP (139 aa)) folds into the DAC domain. ATP contacts are provided by residues Gly82, Leu100, and 113 to 117 (TRHRS). Residues 101 to 121 (QPDPSIPTNESGTRHRSAERT) are disordered. Basic and acidic residues predominate over residues 112–121 (GTRHRSAERT).

This sequence belongs to the DisA family. As to quaternary structure, homooctamer. Mg(2+) is required as a cofactor.

The enzyme catalyses 2 ATP = 3',3'-c-di-AMP + 2 diphosphate. Participates in a DNA-damage check-point. DisA forms globular foci that rapidly scan along the chromosomes searching for lesions. Functionally, also has diadenylate cyclase activity, catalyzing the condensation of 2 ATP molecules into cyclic di-AMP (c-di-AMP). c-di-AMP likely acts as a signaling molecule that may couple DNA integrity with a cellular process. The sequence is that of DNA integrity scanning protein DisA from Acidothermus cellulolyticus (strain ATCC 43068 / DSM 8971 / 11B).